Here is a 286-residue protein sequence, read N- to C-terminus: ATP synthase gamma chain (286 aa).

It belongs to the ATPase gamma chain family. In terms of assembly, F-type ATPases have 2 components, CF(1) - the catalytic core - and CF(0) - the membrane proton channel. CF(1) has five subunits: alpha(3), beta(3), gamma(1), delta(1), epsilon(1). CF(0) has three main subunits: a, b and c.

It localises to the cell inner membrane. Functionally, produces ATP from ADP in the presence of a proton gradient across the membrane. The gamma chain is believed to be important in regulating ATPase activity and the flow of protons through the CF(0) complex. The protein is ATP synthase gamma chain of Teredinibacter turnerae (strain ATCC 39867 / T7901).